Consider the following 195-residue polypeptide: Putative archaetidylserine decarboxylase proenzyme (195 aa).

Catalysis depends on S159, which acts as the Schiff-base intermediate with substrate; via pyruvic acid. S159 bears the Pyruvic acid (Ser); by autocatalysis mark.

Belongs to the phosphatidylserine decarboxylase family. PSD-A subfamily. As to quaternary structure, heterodimer of a large membrane-associated beta subunit and a small pyruvoyl-containing alpha subunit. Requires pyruvate as cofactor. Is synthesized initially as an inactive proenzyme. Formation of the active enzyme involves a self-maturation process in which the active site pyruvoyl group is generated from an internal serine residue via an autocatalytic post-translational modification. Two non-identical subunits are generated from the proenzyme in this reaction, and the pyruvate is formed at the N-terminus of the alpha chain, which is derived from the carboxyl end of the proenzyme. The autoendoproteolytic cleavage occurs by a canonical serine protease mechanism, in which the side chain hydroxyl group of the serine supplies its oxygen atom to form the C-terminus of the beta chain, while the remainder of the serine residue undergoes an oxidative deamination to produce ammonia and the pyruvoyl prosthetic group on the alpha chain. During this reaction, the Ser that is part of the protease active site of the proenzyme becomes the pyruvoyl prosthetic group, which constitutes an essential element of the active site of the mature decarboxylase. Post-translationally, is synthesized initially as an inactive proenzyme. Formation of the active enzyme involves a self-maturation process in which the active site pyruvoyl group is generated from an internal serine residue via an autocatalytic post-translational modification. Two non-identical subunits are generated from the proenzyme in this reaction, and the pyruvate is formed at the N-terminus of the alpha chain, which is derived from the carboxyl end of the proenzyme. The post-translation cleavage follows an unusual pathway, termed non-hydrolytic serinolysis, in which the side chain hydroxyl group of the serine supplies its oxygen atom to form the C-terminus of the beta chain, while the remainder of the serine residue undergoes an oxidative deamination to produce ammonia and the pyruvoyl prosthetic group on the alpha chain.

The protein resides in the cell membrane. The catalysed reaction is archaetidylserine + H(+) = archaetidylethanolamine + CO2. Catalyzes the formation of archaetidylethanolamine (PtdEtn) from archaetidylserine (PtdSer). In Archaeoglobus fulgidus (strain ATCC 49558 / DSM 4304 / JCM 9628 / NBRC 100126 / VC-16), this protein is Putative archaetidylserine decarboxylase proenzyme.